Here is a 1438-residue protein sequence, read N- to C-terminus: Pyochelin synthetase PchE (1438 aa).

Positions Asp6–Asp85 constitute a Carrier 1 domain. Residue Ser46 is modified to O-(pantetheine 4'-phosphoryl)serine. Residues Arg136–Ala442 are condensation/cyclization. Residues Arg563–Arg950 form an adenylation region. The Carrier 2 domain maps to Glu1350–Thr1425. O-(pantetheine 4'-phosphoryl)serine is present on Ser1385.

This sequence belongs to the NRP synthetase family. Requires pantetheine 4'-phosphate as cofactor.

The catalysed reaction is holo-[peptidyl-carrier protein] + L-cysteine + ATP = L-cysteinyl-[peptidyl-carrier protein] + AMP + diphosphate. It functions in the pathway siderophore biosynthesis. It participates in antifungal biosynthesis. Functionally, involved in the biosynthesis of the siderophore pyochelin. Accepts salicylate activated by PchD at the first peptidyl carrier domain (ArCP), and activates and fixes one molecule of cysteine at the second peptidyl carrier domain (PCP1) via a thioester linkage to the phosphopanthetheine moiety. Then catalyzes the condensation reaction between the salicylate bound to the first site and the cysteine bound to the second site, and the cyclization of the cysteine to form the salicyl-thiazolinyl-S-PCP1 intermediate at the second site. When this intermediate is released by the action of a thioesterase, it produces the antifungal antibiotic dihydroaeruginoic acid (Dha or hydroxyphenyl-thiazolinyl-carboxylate). The protein is Pyochelin synthetase PchE of Pseudomonas aeruginosa (strain UCBPP-PA14).